The primary structure comprises 440 residues: Protein translocase subunit SecY (440 aa).

The next 10 helical transmembrane spans lie at 17-37 (IFFT…PSPG), 74-94 (IFAI…LLTV), 116-135 (YTRY…IVAL), 155-175 (FFDL…VMWM), 178-198 (LITE…GIAT), 213-233 (GVVF…VVFV), 270-290 (VIPV…TQIV), 316-336 (WQYI…YVSV), 374-394 (LLFV…IMLD), and 403-423 (GATP…LTTV).

Belongs to the SecY/SEC61-alpha family. As to quaternary structure, component of the Sec protein translocase complex. Heterotrimer consisting of SecY, SecE and SecG subunits. The heterotrimers can form oligomers, although 1 heterotrimer is thought to be able to translocate proteins. Interacts with the ribosome. Interacts with SecDF, and other proteins may be involved. Interacts with SecA.

It is found in the cell membrane. Functionally, the central subunit of the protein translocation channel SecYEG. Consists of two halves formed by TMs 1-5 and 6-10. These two domains form a lateral gate at the front which open onto the bilayer between TMs 2 and 7, and are clamped together by SecE at the back. The channel is closed by both a pore ring composed of hydrophobic SecY resides and a short helix (helix 2A) on the extracellular side of the membrane which forms a plug. The plug probably moves laterally to allow the channel to open. The ring and the pore may move independently. In Corynebacterium glutamicum (strain ATCC 13032 / DSM 20300 / JCM 1318 / BCRC 11384 / CCUG 27702 / LMG 3730 / NBRC 12168 / NCIMB 10025 / NRRL B-2784 / 534), this protein is Protein translocase subunit SecY.